Reading from the N-terminus, the 369-residue chain is Peptidyl-prolyl cis-trans isomerase D (369 aa).

Positions 7–175 (YFDISCNGKP…EDWKIADCGE (169 aa)) constitute a PPIase cyclophilin-type domain. TPR repeat units follow at residues 217–250 (VSKI…LNDY), 268–301 (LSCY…EQID), and 306–339 (TKAL…EPND).

It belongs to the cyclophilin-type PPIase family. PPIase D subfamily.

The protein resides in the cytoplasm. It carries out the reaction [protein]-peptidylproline (omega=180) = [protein]-peptidylproline (omega=0). Functionally, PPIases accelerate the folding of proteins. It catalyzes the cis-trans isomerization of proline imidic peptide bonds in oligopeptides. This Candida albicans (strain SC5314 / ATCC MYA-2876) (Yeast) protein is Peptidyl-prolyl cis-trans isomerase D (CPR6).